The chain runs to 291 residues: 4-hydroxy-tetrahydrodipicolinate synthase (291 aa).

Thr45 is a pyruvate binding site. Residue Tyr133 is the Proton donor/acceptor of the active site. Catalysis depends on Lys161, which acts as the Schiff-base intermediate with substrate. Ile203 lines the pyruvate pocket.

It belongs to the DapA family. Homotetramer.

Its subcellular location is the cytoplasm. It catalyses the reaction L-aspartate 4-semialdehyde + pyruvate = (2S,4S)-4-hydroxy-2,3,4,5-tetrahydrodipicolinate + H2O + H(+). It participates in amino-acid biosynthesis; L-lysine biosynthesis via DAP pathway; (S)-tetrahydrodipicolinate from L-aspartate: step 3/4. With respect to regulation, is allosterically feedback inhibited by lysine; the N.meningitidis enzyme is significantly more sensitive to lysine than the E.coli enzyme. Shows substrate inhibition by (S)-ASA, with a Ki of 1.7 mM. Functionally, catalyzes the condensation of (S)-aspartate-beta-semialdehyde [(S)-ASA] and pyruvate to 4-hydroxy-tetrahydrodipicolinate (HTPA). The sequence is that of 4-hydroxy-tetrahydrodipicolinate synthase from Neisseria meningitidis serogroup B (strain ATCC BAA-335 / MC58).